A 137-amino-acid polypeptide reads, in one-letter code: Ribonuclease VapC27 (137 aa).

The region spanning 7 to 125 (VDTSVAIPLL…ATRDARAKDT (119 aa)) is the PINc domain. Mg(2+)-binding residues include Asp8 and Asp101.

This sequence belongs to the PINc/VapC protein family. In terms of assembly, interacts with cognate antitoxin VapB27. Mg(2+) is required as a cofactor.

The protein localises to the secreted. Functionally, probably the toxic component of a type II toxin-antitoxin (TA) system. An RNase. Its cognate antitoxin is VapB27. The polypeptide is Ribonuclease VapC27 (Mycobacterium tuberculosis (strain ATCC 25618 / H37Rv)).